The primary structure comprises 557 residues: Putative UDP-glucuronate:xylan alpha-glucuronosyltransferase 4 (557 aa).

A helical; Signal-anchor for type II membrane protein transmembrane segment spans residues 11–31 (KIFMIYLILVSLSLLGLILPF). Mn(2+) is bound by residues D365 and D367. Substrate contacts are provided by residues 365–367 (DAD), 394–396 (NSG), 421–425 (NGGDQ), and 466–471 (HYLGLK). H466 lines the Mn(2+) pocket.

Belongs to the glycosyltransferase 8 family. Glycogenin subfamily. Mn(2+) serves as cofactor.

It is found in the golgi apparatus membrane. Functionally, may be involved in the substitutions of the xylan backbone in stem glucuronoxylan. This chain is Putative UDP-glucuronate:xylan alpha-glucuronosyltransferase 4 (GUX4), found in Arabidopsis thaliana (Mouse-ear cress).